Here is a 557-residue protein sequence, read N- to C-terminus: MVSKLTSLQQELLSALLSSGVTKEVLVQALEELLPSPNFGVKLETLPLSPGSGAEPDTKPVFHTLTNGHAKGRLSGDEGSEDGDDYDTPPILKELQALNTEEAAEQRAEVDRMLSEDPWRAAKMIKGYMQQHNIPQREVVDVTGLNQSHLSQHLNKGTPMKTQKRAALYTWYVRKQREILRQFNQTVQSSGNMTDKSSQDQLLFLFPEFSQQSQGPGQSDDACSEPTNKKMRRNRFKWGPASQQILYQAYDRQKNPSKEEREALVEECNRAECLQRGVSPSKAHGLGSNLVTEVRVYNWFANRRKEEAFRQKLAMDAYSSNQTHSLNPLLSHGSPHHQPSSSPPNKLSGVRYSQQGNNEVTSSSTISHHGNSAMVTSQSVLQQVSPASLDPGHNLLSPDGKMISVSGGGLPPVSTLTNIHSLSHHNPQQSQNLIMTPLSGVMAIAQSLNTSQAQSVPVINSVAGSLAALQPVQFSQQLHSPHQQPLMQQSPGSHMAQQPFMAAVTQLQNSHMYAHKQEPPQYSHTSRFPSAMVVTDTSSISTLTNMSSSKQCPLQAW.

Residues 1–31 form a dimerization region; that stretch reads MVSKLTSLQQELLSALLSSGVTKEVLVQALE. The HNF-p1 domain maps to 1-32; that stretch reads MVSKLTSLQQELLSALLSSGVTKEVLVQALEE. Phosphoserine is present on residues Ser49, Ser52, Ser75, and Ser80. The tract at residues 64 to 85 is disordered; it reads TLTNGHAKGRLSGDEGSEDGDD. In terms of domain architecture, POU-specific atypical spans 93–188; the sequence is KELQALNTEE…ILRQFNQTVQ (96 aa). Positions 231 to 311 form a DNA-binding region, homeobox; HNF1-type; the sequence is MRRNRFKWGP…NRRKEEAFRQ (81 aa). The tract at residues 324 to 370 is disordered; that stretch reads HSLNPLLSHGSPHHQPSSSPPNKLSGVRYSQQGNNEVTSSSTISHHG. Residues 328–344 are compositionally biased toward low complexity; the sequence is PLLSHGSPHHQPSSSPP. The segment covering 351–370 has biased composition (polar residues); it reads RYSQQGNNEVTSSSTISHHG.

Belongs to the HNF1 homeobox family. Binds DNA as a dimer. Can form homodimer or heterodimer with HNF1-alpha. Interacts (via HNF-p1 domain) with PCBD1; the interaction increases its transactivation activity.

The protein resides in the nucleus. In terms of biological role, transcription factor that binds to the inverted palindrome 5'-GTTAATNATTAAC-3'. Binds to the FPC element in the cAMP regulatory unit of the PLAU gene. Transcriptional activity is increased by coactivator PCBD1. The chain is Hepatocyte nuclear factor 1-beta (HNF1B) from Pongo abelii (Sumatran orangutan).